The chain runs to 368 residues: Multifunctional CCA protein (368 aa).

Residues glycine 8 and arginine 11 each contribute to the ATP site. CTP-binding residues include glycine 8 and arginine 11. Mg(2+) contacts are provided by aspartate 21 and aspartate 23. ATP contacts are provided by arginine 91, arginine 137, and arginine 140. Positions 91, 137, and 140 each coordinate CTP.

It belongs to the tRNA nucleotidyltransferase/poly(A) polymerase family. Bacterial CCA-adding enzyme type 1 subfamily. As to quaternary structure, monomer. Can also form homodimers and oligomers. Requires Mg(2+) as cofactor. Ni(2+) serves as cofactor.

It carries out the reaction a tRNA precursor + 2 CTP + ATP = a tRNA with a 3' CCA end + 3 diphosphate. It catalyses the reaction a tRNA with a 3' CCA end + 2 CTP + ATP = a tRNA with a 3' CCACCA end + 3 diphosphate. In terms of biological role, catalyzes the addition and repair of the essential 3'-terminal CCA sequence in tRNAs without using a nucleic acid template. Adds these three nucleotides in the order of C, C, and A to the tRNA nucleotide-73, using CTP and ATP as substrates and producing inorganic pyrophosphate. tRNA 3'-terminal CCA addition is required both for tRNA processing and repair. Also involved in tRNA surveillance by mediating tandem CCA addition to generate a CCACCA at the 3' terminus of unstable tRNAs. While stable tRNAs receive only 3'-terminal CCA, unstable tRNAs are marked with CCACCA and rapidly degraded. This Pseudomonas putida (strain ATCC 47054 / DSM 6125 / CFBP 8728 / NCIMB 11950 / KT2440) protein is Multifunctional CCA protein.